The primary structure comprises 308 residues: MTAISEALSGITDHQKAHVLAEALPWLQQFRDKVVVVKYGGNAMVDDALKTAFAADMAFLRTVGIQPVVVHGGGPQINAMLGKLGMTGEFKGGFRVTTPEVMDVVRMVLFGQVGRELVGLINAHGPYAVGISGEDAHLFTATKRTVMVEGKPTDIGLVGDVTTVNPEAVLDLIRAGRIPVVSTIAPDSDGVVHNINADTAAAALAEAIGAEKLVVLTDVEGLYTNWPDRDSLATEIDVDALAQLLPSLDAGMVPKMEACLRAVRGGVPTAHVIDGRVAHSVLLELFTGEGIGTMVTPGPTSPTEGVAS.

Substrate is bound by residues 73–74 (GG), arginine 95, and asparagine 194.

It belongs to the acetylglutamate kinase family. ArgB subfamily.

The protein localises to the cytoplasm. The enzyme catalyses N-acetyl-L-glutamate + ATP = N-acetyl-L-glutamyl 5-phosphate + ADP. The protein operates within amino-acid biosynthesis; L-arginine biosynthesis; N(2)-acetyl-L-ornithine from L-glutamate: step 2/4. In terms of biological role, catalyzes the ATP-dependent phosphorylation of N-acetyl-L-glutamate. This is Acetylglutamate kinase from Rhodococcus jostii (strain RHA1).